A 275-amino-acid polypeptide reads, in one-letter code: Putative carbamate hydrolase RutD (275 aa).

The AB hydrolase-1 domain maps to 15-116 (TVVLSSGLGG…SLVVINGWTV (102 aa)).

This sequence belongs to the AB hydrolase superfamily. Hydrolase RutD family.

It catalyses the reaction carbamate + 2 H(+) = NH4(+) + CO2. Functionally, involved in pyrimidine catabolism. May facilitate the hydrolysis of carbamate, a reaction that can also occur spontaneously. In Pantoea ananatis (strain LMG 20103), this protein is Putative carbamate hydrolase RutD.